A 971-amino-acid chain; its full sequence is MDRGLSTSTRIDDEGLRERNVASQSTSTLSPEALTATGDVELKDKTGKDCKTFGRTPDGTVFTVPQTHDMVSQLLSPSEPKNLSDVIVLAILGAHILLLWQLPTGAKVPVFAIIYLFWRAAYNAGIGWLLHNQSHHKTLVRWAEKTKVFVNPATGKNPHPNVYNFFKRELETKIPHDYSFDEAPIEYNTWLVFRRLVDLILMCDFVSYCLFAIACSHHPVNESVLMTVLRWSAGIVLVLFNLWVKLDAHRVVKDFAWYWGDFFYLIDQELTFDGVFEMAPHPMYSVGYAGYYGISLMAASYKVLFISIIAHAAQFAFLVLVENPHIDKTYNPPPSRKRSAEQETGSVSSRTADSPIAPTPIDEQIPHAPTFSSSPPQSVHELLGLHNLDLYRITDTSSVLIQFLVFALTVLTPSTPWYQFLFVANAAVWRLWFSIGVGYMLHRQSNHKAWTRHFVKYGETPQEAWNQWKGTYHLSMIMCYASFIAAVWKMYNFPADWGYGLVLLRHVLGAGLISLQIWTSVSIYESLGEFGWFYGDFFFDGSSKLTYNGIYRFLNNPERVLGLAGVWGAVLITSSGAITFLALLSHILSLAFIQFIERPHMQKLYGQSLRQDAGLVKSLKKSLPPTLRQLHGSVDKIFDESFEFIEEIIETARPKLANGVNTFVKDTTALFQSYPARVTISRIDEDLAGYDSRDYSLEVEGTDSSSLAEHDQSTGREGANARMPLDRRGDLKNLVFEYGAPIRVKWTAPLNHSKKDWIGLYKVTDNTSREVTRVSSQGRWIAVNEGAYDNLTCEKGIVKSDVVIKATQQQDGDKRDLATGEVIFSGDKLFWTQGVFEFRYHHNAKHNVMAISRPFEIRIGRYEEEDDHELTQASVEKSLLPVIRSCFDRDPEIAPEAVDEPFGSLVERDGKFAKRVVFAVHQMFGVEFAPGVVQADGTVRNLAWRVCNAKRVLAPYSMSRNGASTPTERKE.

Residues 1–30 (MDRGLSTSTRIDDEGLRERNVASQSTSTLS) form a disordered region. The Lumenal segment spans residues 1-85 (MDRGLSTSTR…SPSEPKNLSD (85 aa)). Residues 10–20 (RIDDEGLRERN) show a composition bias toward basic and acidic residues. A compositionally biased stretch (polar residues) spans 21 to 30 (VASQSTSTLS). A helical membrane pass occupies residues 86 to 106 (VIVLAILGAHILLLWQLPTGA). Residues 107–109 (KVP) lie on the Cytoplasmic side of the membrane. A helical membrane pass occupies residues 110–130 (VFAIIYLFWRAAYNAGIGWLL). The Lumenal portion of the chain corresponds to 131 to 195 (HNQSHHKTLV…EYNTWLVFRR (65 aa)). Residues 196-216 (LVDLILMCDFVSYCLFAIACS) traverse the membrane as a helical segment. The Cytoplasmic portion of the chain corresponds to 217-223 (HHPVNES). A helical membrane pass occupies residues 224 to 244 (VLMTVLRWSAGIVLVLFNLWV). Residues 245–277 (KLDAHRVVKDFAWYWGDFFYLIDQELTFDGVFE) are Lumenal-facing. A helical transmembrane segment spans residues 278–298 (MAPHPMYSVGYAGYYGISLMA). Residues 299–300 (AS) lie on the Cytoplasmic side of the membrane. The chain crosses the membrane as a helical span at residues 301–321 (YKVLFISIIAHAAQFAFLVLV). The Lumenal segment spans residues 322–389 (ENPHIDKTYN…HELLGLHNLD (68 aa)). Positions 330 to 359 (YNPPPSRKRSAEQETGSVSSRTADSPIAPT) are disordered. A compositionally biased stretch (polar residues) spans 342 to 352 (QETGSVSSRTA). A helical transmembrane segment spans residues 390 to 411 (LYRITDTSSVLIQFLVFALTVL). The Cytoplasmic segment spans residues 412–417 (TPSTPW). The chain crosses the membrane as a helical span at residues 418 to 441 (YQFLFVANAAVWRLWFSIGVGYML). The Lumenal portion of the chain corresponds to 442–473 (HRQSNHKAWTRHFVKYGETPQEAWNQWKGTYH). Residues 474–494 (LSMIMCYASFIAAVWKMYNFP) traverse the membrane as a helical segment. Topologically, residues 495–496 (AD) are cytoplasmic. The helical transmembrane segment at 497–517 (WGYGLVLLRHVLGAGLISLQI) threads the bilayer. Over 518 to 575 (WTSVSIYESLGEFGWFYGDFFFDGSSKLTYNGIYRFLNNPERVLGLAGVWGAVLITSS) the chain is Lumenal. The chain crosses the membrane as a helical span at residues 576–596 (GAITFLALLSHILSLAFIQFI). Over 597–971 (ERPHMQKLYG…GASTPTERKE (375 aa)) the chain is Cytoplasmic. The tract at residues 699–723 (VEGTDSSSLAEHDQSTGREGANARM) is disordered.

Belongs to the class VI-like SAM-binding methyltransferase superfamily. CHO2 family.

The protein resides in the endoplasmic reticulum membrane. It catalyses the reaction a 1,2-diacyl-sn-glycero-3-phosphoethanolamine + S-adenosyl-L-methionine = a 1,2-diacyl-sn-glycero-3-phospho-N-methylethanolamine + S-adenosyl-L-homocysteine + H(+). It participates in phospholipid metabolism; phosphatidylcholine biosynthesis. Functionally, catalyzes the first step of the methylation pathway of phosphatidylcholine biosynthesis, the SAM-dependent methylation of phosphatidylethanolamine (PE) to phosphatidylmonomethylethanolamine (PMME). The polypeptide is Phosphatidylethanolamine N-methyltransferase (cho2) (Aspergillus flavus (strain ATCC 200026 / FGSC A1120 / IAM 13836 / NRRL 3357 / JCM 12722 / SRRC 167)).